The following is a 128-amino-acid chain: Large ribosomal subunit protein bL17 (128 aa).

This sequence belongs to the bacterial ribosomal protein bL17 family. As to quaternary structure, part of the 50S ribosomal subunit. Contacts protein L32.

This is Large ribosomal subunit protein bL17 from Baumannia cicadellinicola subsp. Homalodisca coagulata.